A 166-amino-acid chain; its full sequence is MSVNMEDLRHQVMINQFVLAAGCAADQAKQLLQAAHWQFETALSAFFQESNVPSAQHHTHMMCTPSNTPATPPNFPDALAMFSKLRTSESLQNSSSPAASNACSPPGNFNPYWASSPPNQQPVWLPPASPTTHLHHHHHHPQPVWPPNSQPTGGPQKAMAAMDGQR.

The tract at residues 120–166 (QQPVWLPPASPTTHLHHHHHHPQPVWPPNSQPTGGPQKAMAAMDGQR) is disordered.

This sequence belongs to the UBALD family.

This Xenopus laevis (African clawed frog) protein is UBA-like domain-containing protein 2-A (ubald2-a).